Here is a 106-residue protein sequence, read N- to C-terminus: Iron-sulfur cluster assembly protein CyaY (106 aa).

It belongs to the frataxin family.

In terms of biological role, involved in iron-sulfur (Fe-S) cluster assembly. May act as a regulator of Fe-S biogenesis. This is Iron-sulfur cluster assembly protein CyaY from Colwellia psychrerythraea (strain 34H / ATCC BAA-681) (Vibrio psychroerythus).